The primary structure comprises 288 residues: Ankyrin repeat and SOCS box protein 8 (288 aa).

Ser17 is modified (phosphoserine). 4 ANK repeats span residues 52–81, 85–113, 117–146, and 150–179; these read GTLKPLHCACMVSDADCVELLLEKGAEVNA, YNRTALHYAAEKDEACVEVLLEYGANPNA, NRDTPLHWAAFKNNAECVRALLESGASVNA, and NNDTPLSWAAMKGNLESVSILLDYGAEVRV. Residues 235–288 enclose the SOCS box domain; it reads QLCEKLTVLCSAPGTLKTLSRYAVRRSLGLQYLPDAVKGLPLPASLKEYLLLIE.

Belongs to the ankyrin SOCS box (ASB) family. In terms of assembly, interacts with TBK1; this interaction promotes TBK1 proteasomal degradation. Post-translationally, phosphorylated by TBK1.

The protein localises to the cytoplasm. It participates in protein modification; protein ubiquitination. Its function is as follows. May be a substrate-recognition component of a SCF-like ECS (Elongin-Cullin-SOCS-box protein) E3 ubiquitin-protein ligase complex which mediates the ubiquitination and subsequent proteasomal degradation of target proteins. Inhibits IFN-beta production through the IRF3 signaling pathway by targeting TBK1 via 'Lys-48'-linked ubiquitination, leading to its proteasomal degradation. The protein is Ankyrin repeat and SOCS box protein 8 (ASB8) of Bos taurus (Bovine).